Here is a 328-residue protein sequence, read N- to C-terminus: Phospholipid scramblase 1 (328 aa).

Positions 1-93 (MENHSKQTEA…NHPGGPGGTP (93 aa)) are proline-rich domain (PRD). The interval 1–96 (MENHSKQTEA…GGPGGTPWMP (96 aa)) is disordered. The Cytoplasmic segment spans residues 1–297 (MENHSKQTEA…IQFPLDLDVK (297 aa)). Residues 18 to 26 (PAGYPPPYP) carry the SH3-binding 1 motif. A PPxY motif motif is present at residues 22–25 (PPPY). Low complexity predominate over residues 28 to 47 (AAFQGPSDHAAYPIPQAGYQ). Over residues 49 to 64 (PPGPYPGPQPGYPVPP) the composition is skewed to pro residues. An SH3-binding 2 motif is present at residues 56–64 (PQPGYPVPP). Tyr83 is subject to Phosphotyrosine; by ABL. An SH3-binding 3 motif is present at residues 93–101 (PWMPAPPPP). Residue Thr170 is modified to Phosphothreonine; by PKC/PRKCD. S-palmitoyl cysteine attachment occurs at residues Cys193, Cys194, Cys197, and Cys198. Positions 269–275 (SKQWSGF) match the Nuclear localization signal motif. Residues 298-314 (MKAVMLGACFLIDFMFF) traverse the membrane as a helical segment. At 315–328 (ERTGNEEQRSGAWQ) the chain is on the extracellular side.

This sequence belongs to the phospholipid scramblase family. As to quaternary structure, forms homooligomers in the presence of calcium. Interacts with ABL. Interacts with RELT, RELL1 and RELL2. Interacts with OXSR1 in the presence of RELT. Interacts with OCLN, TOP2A and TOP2B. Interacts with TRPC1, TRPC4 and TRPC5. Interacts with ILDR1. Ca(2+) serves as cofactor. Requires Mg(2+) as cofactor. Zn(2+) is required as a cofactor. Phosphorylation at Thr-170 by PKC/PKCD increases its phospholipid scramblase activity during both cell stimulation and apoptosis. Phosphorylated by OXSR1 in the presence of RELT. In terms of processing, palmitoylation is required for its phospholipid scramblase activity. Palmitoylation regulates its localization to the cell membrane or the nucleus; trafficking to the cell membrane is dependent upon palmitoylation whereas in the absence of palmitoylation, localizes to the nucleus. Highly expressed in kidney, lung, liver and bone marrow, slightly in spleen, heart and macrophage.

It localises to the cell membrane. It is found in the nucleus. Its subcellular location is the cytoplasm. The protein resides in the perinuclear region. The catalysed reaction is a 1,2-diacyl-sn-glycero-3-phosphocholine(in) = a 1,2-diacyl-sn-glycero-3-phosphocholine(out). It catalyses the reaction a 1,2-diacyl-sn-glycero-3-phosphoethanolamine(in) = a 1,2-diacyl-sn-glycero-3-phosphoethanolamine(out). It carries out the reaction a 1,2-diacyl-sn-glycero-3-phospho-L-serine(in) = a 1,2-diacyl-sn-glycero-3-phospho-L-serine(out). Functionally, catalyzes calcium-induced ATP-independent rapid bidirectional and non-specific distribution of phospholipids (lipid scrambling or lipid flip-flop) between the inner and outer leaflet of the plasma membrane resulting in collapse of the phospholipid asymmetry which leads to phosphatidylserine externalization on the cell surface. Mediates calcium-dependent phosphatidylserine externalization and apoptosis in neurons via its association with TRPC5. Also exhibits magnesium-dependent nuclease activity against double-stranded DNA and RNA but not single-stranded DNA and can enhance DNA decatenation mediated by TOP2A. Negatively regulates FcR-mediated phagocytosis in differentiated macrophages. May contribute to cytokine-regulated cell proliferation and differentiation. The protein is Phospholipid scramblase 1 (Plscr1) of Mus musculus (Mouse).